A 231-amino-acid chain; its full sequence is UPF0758 protein pc1765 (231 aa).

Positions 107-229 (LIEHSSHAYQ…YVSFKDQNLL (123 aa)) constitute an MPN domain. Zn(2+)-binding residues include His178, His180, and Asp191. Residues 178–191 (HNHPSGDPMPSNQD) carry the JAMM motif motif.

It belongs to the UPF0758 family.

This chain is UPF0758 protein pc1765, found in Protochlamydia amoebophila (strain UWE25).